The chain runs to 324 residues: Antihemorrhagic factor cHLP-A (324 aa).

The N-terminal stretch at 1 to 19 (MNSLVALVLLGQIIGSTLS) is a signal peptide. Cystatin fetuin-A-type domains are found at residues 21–130 (QLGP…VKCK) and 141–254 (RNCP…SDCV). 6 disulfide bridges follow: C28-C315, C85-C96, C110-C129, C143-C146, C205-C217, and C230-C253. The N-linked (GlcNAc...) asparagine glycan is linked to N204. An N-linked (GlcNAc...) asparagine glycan is attached at N282.

Belongs to the fetuin family. As to quaternary structure, homodimer. As to expression, expressed by the liver.

It localises to the secreted. Functionally, potent inhibitor of hemorrhagic activity but also proteolytic activities. Inhibition occurs by formation of a non-covalent complex between this protein and the proteinases at their metalloproteinase domains. The sequence is that of Antihemorrhagic factor cHLP-A from Gloydius brevicauda (Korean slamosa snake).